Here is a 280-residue protein sequence, read N- to C-terminus: Eukaryotic translation initiation factor 3 subunit F-1 (280 aa).

The MPN domain occupies 8 to 138; sequence VRVHPVVLFQ…LRAYVCIQLG (131 aa).

This sequence belongs to the eIF-3 subunit F family. In terms of assembly, component of the eukaryotic translation initiation factor 3 (eIF-3) complex. The eIF-3 complex interacts with pix.

It localises to the cytoplasm. In terms of biological role, component of the eukaryotic translation initiation factor 3 (eIF-3) complex, which is involved in protein synthesis of a specialized repertoire of mRNAs and, together with other initiation factors, stimulates binding of mRNA and methionyl-tRNAi to the 40S ribosome. The eIF-3 complex specifically targets and initiates translation of a subset of mRNAs involved in cell proliferation. The polypeptide is Eukaryotic translation initiation factor 3 subunit F-1 (Drosophila yakuba (Fruit fly)).